The following is a 103-amino-acid chain: Small ribosomal subunit protein uS10 (103 aa).

Belongs to the universal ribosomal protein uS10 family. Part of the 30S ribosomal subunit.

Its function is as follows. Involved in the binding of tRNA to the ribosomes. The protein is Small ribosomal subunit protein uS10 of Campylobacter lari (strain RM2100 / D67 / ATCC BAA-1060).